We begin with the raw amino-acid sequence, 211 residues long: Beta-crystallin B3 (211 aa).

The residue at position 1 (Met-1) is an N-acetylmethionine. Ala-2 is modified (N-acetylalanine; in Beta-crystallin B3, N-terminally processed). The N-terminal arm stretch occupies residues 2–23 (AEQHGAPEQAAASKSHGGLGGS). 2 consecutive Beta/gamma crystallin 'Greek key' domains span residues 24-63 (YKVTVYELENFQGKRCELSAECPNLTESLLQKVGSIQVES) and 64-108 (GPWL…RPLH). Positions 109-113 (IDGPD) are connecting peptide. Beta/gamma crystallin 'Greek key' domains follow at residues 114 to 155 (HKLH…RVIN) and 156 to 198 (GTWV…RRIR). Residues 200 to 211 (QKWHKRGCFLSS) are C-terminal arm.

Belongs to the beta/gamma-crystallin family. As to quaternary structure, homo/heterodimer, or complexes of higher-order. The structure of beta-crystallin oligomers seems to be stabilized through interactions between the N-terminal arms.

In terms of biological role, crystallins are the dominant structural components of the vertebrate eye lens. The sequence is that of Beta-crystallin B3 (Crybb3) from Rattus norvegicus (Rat).